We begin with the raw amino-acid sequence, 361 residues long: sn-glycerol-3-phosphate import ATP-binding protein UgpC (361 aa).

An ABC transporter domain is found at 4–235 (LSLKGVRKSY…PATVFVAGFI (232 aa)). 37-44 (GPSGCGKS) is an ATP binding site.

Belongs to the ABC transporter superfamily. sn-glycerol-3-phosphate importer (TC 3.A.1.1.3) family. As to quaternary structure, the complex is composed of two ATP-binding proteins (UgpC), two transmembrane proteins (UgpA and UgpE) and a solute-binding protein (UgpB).

The protein localises to the cell inner membrane. The catalysed reaction is sn-glycerol 3-phosphate(out) + ATP + H2O = sn-glycerol 3-phosphate(in) + ADP + phosphate + H(+). Part of the ABC transporter complex UgpBAEC involved in sn-glycerol-3-phosphate (G3P) import. Responsible for energy coupling to the transport system. This is sn-glycerol-3-phosphate import ATP-binding protein UgpC from Burkholderia lata (strain ATCC 17760 / DSM 23089 / LMG 22485 / NCIMB 9086 / R18194 / 383).